Reading from the N-terminus, the 282-residue chain is Small ribosomal subunit protein uS2 (282 aa).

Residues 260–282 (KRRRSKVYKEEEREVVTNEDESR) form a disordered region. A compositionally biased stretch (basic and acidic residues) spans 266–282 (VYKEEEREVVTNEDESR).

Belongs to the universal ribosomal protein uS2 family.

The sequence is that of Small ribosomal subunit protein uS2 from Wolbachia pipientis wMel.